The sequence spans 90 residues: Small ribosomal subunit protein bS16 (90 aa).

Belongs to the bacterial ribosomal protein bS16 family.

The chain is Small ribosomal subunit protein bS16 from Moorella thermoacetica (strain ATCC 39073 / JCM 9320).